The sequence spans 371 residues: Transcriptional regulator of yeast form adherence 2 (371 aa).

A C3H1-type 1 zinc finger spans residues 16–44; the sequence is RNPAVLCSFYSKIGACRHGEKCSKKHLKP. A compositionally biased stretch (polar residues) spans 94–107; the sequence is TVSQIDDSPHSNSG. Residues 94–194 are disordered; that stretch reads TVSQIDDSPH…NIEDAKLEDT (101 aa). A compositionally biased stretch (acidic residues) spans 115 to 124; it reads VETQEVETEN. Basic and acidic residues predominate over residues 132–194; the sequence is GDVKIDHNED…NIEDAKLEDT (63 aa). One can recognise an RRM domain in the interval 192-279; sequence EDTEKDKLPE…KPVYSDLSPV (88 aa). A C3H1-type 2 zinc finger spans residues 281–309; that stretch reads DFNDACCEEYRDYHDCQRGAMCNYMHVRL. Residues 337-371 are disordered; the sequence is ELPGDIRSSSSTNDDETNGNENGISSTMAVLEQLS. Over residues 355 to 371 the composition is skewed to polar residues; sequence GNENGISSTMAVLEQLS.

It localises to the nucleus. In terms of biological role, transcription factor required for yeast cell adherence to silicone substrate. The chain is Transcriptional regulator of yeast form adherence 2 (TRY2) from Candida albicans (strain SC5314 / ATCC MYA-2876) (Yeast).